The sequence spans 537 residues: CTP synthase (537 aa).

The tract at residues 1 to 268 (MPAKFIFVTG…DSIVVERLKL (268 aa)) is amidoligase domain. Residue Ser-14 coordinates CTP. Ser-14 is a UTP binding site. 15–20 (SLGKGI) serves as a coordination point for ATP. Tyr-55 lines the L-glutamine pocket. Residue Asp-72 participates in ATP binding. Mg(2+)-binding residues include Asp-72 and Glu-142. Residues 149 to 151 (DIE), 189 to 194 (KTKPTQ), and Lys-225 each bind CTP. UTP is bound by residues 189–194 (KTKPTQ) and Lys-225. Residues 293 to 534 (EIALVGKYVT…IGAACRRAGG (242 aa)) form the Glutamine amidotransferase type-1 domain. L-glutamine is bound at residue Gly-354. Residue Cys-381 is the Nucleophile; for glutamine hydrolysis of the active site. L-glutamine is bound by residues 382–385 (LGMQ), Glu-405, and Arg-462. Active-site residues include His-507 and Glu-509.

This sequence belongs to the CTP synthase family. Homotetramer.

It carries out the reaction UTP + L-glutamine + ATP + H2O = CTP + L-glutamate + ADP + phosphate + 2 H(+). The enzyme catalyses L-glutamine + H2O = L-glutamate + NH4(+). The catalysed reaction is UTP + NH4(+) + ATP = CTP + ADP + phosphate + 2 H(+). The protein operates within pyrimidine metabolism; CTP biosynthesis via de novo pathway; CTP from UDP: step 2/2. With respect to regulation, allosterically activated by GTP, when glutamine is the substrate; GTP has no effect on the reaction when ammonia is the substrate. The allosteric effector GTP functions by stabilizing the protein conformation that binds the tetrahedral intermediate(s) formed during glutamine hydrolysis. Inhibited by the product CTP, via allosteric rather than competitive inhibition. In terms of biological role, catalyzes the ATP-dependent amination of UTP to CTP with either L-glutamine or ammonia as the source of nitrogen. Regulates intracellular CTP levels through interactions with the four ribonucleotide triphosphates. The polypeptide is CTP synthase (Moorella thermoacetica (strain ATCC 39073 / JCM 9320)).